Consider the following 610-residue polypeptide: Serine/threonine-protein kinase RCK2 (610 aa).

Disordered stretches follow at residues 1–55 (MLKI…QDKN) and 99–127 (TSVP…SLSE). Positions 11 to 24 (KKPDQADLSQESKK) are enriched in basic and acidic residues. The span at 31 to 55 (RSSGTNNKDVSQITSSPKKSFQDKN) shows a compositional bias: polar residues. Phosphoserine occurs at positions 46 and 50. Residues 163-478 (YKLINKIGEG…IDQFLDDPWL (316 aa)) enclose the Protein kinase domain. 169–177 (IGEGAFSKV) provides a ligand contact to ATP. A Phosphoserine modification is found at Ser187. ATP is bound at residue Lys201. Asp313 acts as the Proton acceptor in catalysis. The residue at position 350 (Thr350) is a Phosphothreonine. The tract at residues 493–506 (KKAGTSERRHPHKK) is calmodulin-binding. The residue at position 520 (Ser520) is a Phosphoserine. The segment at 541-564 (EDRMGTRGGLGSLAEDEELEDSYS) is disordered.

The protein belongs to the protein kinase superfamily. CAMK Ser/Thr protein kinase family. CaMK subfamily. Post-translationally, autophosphorylated. Phosphorylated by HOG1 at Ser-520 after osmotic stress.

The protein localises to the cytoplasm. The enzyme catalyses L-seryl-[protein] + ATP = O-phospho-L-seryl-[protein] + ADP + H(+). It carries out the reaction L-threonyl-[protein] + ATP = O-phospho-L-threonyl-[protein] + ADP + H(+). Its activity is regulated as follows. Activated by Ser-520 phosphorylation by HOG1. Serine/threonine-protein kinase involved in a signal transduction pathway that is activated by changes in the osmolarity of the extracellular environment. The chain is Serine/threonine-protein kinase RCK2 (RCK2) from Saccharomyces cerevisiae (strain ATCC 204508 / S288c) (Baker's yeast).